The chain runs to 538 residues: Chaperonin GroEL (538 aa).

Residues 29-32, 86-90, G413, 476-478, and D492 each bind ATP; these read TLGP, DGTTT, and NAA.

Belongs to the chaperonin (HSP60) family. Forms a cylinder of 14 subunits composed of two heptameric rings stacked back-to-back. Interacts with the co-chaperonin GroES.

It localises to the cytoplasm. It carries out the reaction ATP + H2O + a folded polypeptide = ADP + phosphate + an unfolded polypeptide.. Functionally, together with its co-chaperonin GroES, plays an essential role in assisting protein folding. The GroEL-GroES system forms a nano-cage that allows encapsulation of the non-native substrate proteins and provides a physical environment optimized to promote and accelerate protein folding. This Bacillus sp. (strain PS3) protein is Chaperonin GroEL.